A 1067-amino-acid chain; its full sequence is Chitinase-like protein C25A8.4 (1067 aa).

Residues 1–18 (MGIKTLIWLSILVVGIYC) form the signal peptide. GH18 domains are found at residues 26 to 364 (PVHY…IRNT), 372 to 727 (CTRL…QVCQ), and 743 to 1067 (FVVS…HKCR). A disulfide bridge links cysteine 30 with cysteine 51. N-linked (GlcNAc...) asparagine glycans are attached at residues asparagine 47 and asparagine 216. A disulfide bridge connects residues cysteine 376 and cysteine 397. 3 N-linked (GlcNAc...) asparagine glycosylation sites follow: asparagine 475, asparagine 538, and asparagine 710. A disulfide bridge links cysteine 747 with cysteine 768. Residues asparagine 797 and asparagine 830 are each glycosylated (N-linked (GlcNAc...) asparagine). Glutamate 855 functions as the Proton donor in the catalytic mechanism. Residues asparagine 887, asparagine 933, and asparagine 1010 are each glycosylated (N-linked (GlcNAc...) asparagine).

Belongs to the glycosyl hydrolase 18 family.

The protein resides in the secreted. In terms of biological role, putative chitinase. The polypeptide is Chitinase-like protein C25A8.4 (cht-3) (Caenorhabditis elegans).